We begin with the raw amino-acid sequence, 465 residues long: Plasma alpha-L-fucosidase (465 aa).

The first 26 residues, 1 to 26, serve as a signal peptide directing secretion; it reads MRPQELPRLAFPLLLLLLLPPPPCPA. Asparagine 169 and asparagine 237 each carry an N-linked (GlcNAc...) asparagine glycan. Serine 299 is subject to Phosphoserine. N-linked (GlcNAc...) asparagine glycosylation occurs at asparagine 375.

This sequence belongs to the glycosyl hydrolase 29 family. In terms of assembly, homotetramer.

The protein resides in the secreted. It catalyses the reaction an alpha-L-fucoside + H2O = L-fucose + an alcohol. Alpha-L-fucosidase is responsible for hydrolyzing the alpha-1,6-linked fucose joined to the reducing-end N-acetylglucosamine of the carbohydrate moieties of glycoproteins. This Pongo abelii (Sumatran orangutan) protein is Plasma alpha-L-fucosidase (FUCA2).